A 287-amino-acid chain; its full sequence is HTH-type transcriptional regulator MurR (287 aa).

An HTH rpiR-type domain is found at 1–77 (MLYLAKMRNA…MALIEEYSVN (77 aa)). Residues 37-56 (SRNLAKQLEVSQSSIVKFAQ) constitute a DNA-binding region (H-T-H motif). Positions 128–268 (VINLISKARL…FVGMVQLNDV (141 aa)) constitute an SIS domain.

In terms of assembly, homotetramer.

It participates in amino-sugar metabolism; N-acetylmuramate degradation [regulation]. Represses the expression of the murPQ operon involved in the uptake and degradation of N-acetylmuramic acid (MurNAc). Binds to two adjacent inverted repeats within the operator region. MurNAc 6-phosphate, the substrate of MurQ, is the specific inducer that weakens binding of MurR to the operator. This Citrobacter koseri (strain ATCC BAA-895 / CDC 4225-83 / SGSC4696) protein is HTH-type transcriptional regulator MurR.